An 81-amino-acid polypeptide reads, in one-letter code: Cytochrome c oxidase subunit NDUFA4 (81 aa).

Topologically, residues 1–14 are mitochondrial matrix; it reads MLRHILGLAKKHPS. An N6-acetyllysine modification is found at lysine 10. The chain crosses the membrane as a helical span at residues 15–37; the sequence is LIPLFVFLGTGATGATLYLLRLA. The Mitochondrial intermembrane segment spans residues 38–81; the sequence is LFSPDVCWDRNNPEPWNKLGPNDQYKFYSVNVDYDKLKKERPDF. Serine 66 carries the phosphoserine modification.

Belongs to the complex IV NDUFA4 subunit family. As to quaternary structure, component of the cytochrome c oxidase (complex IV, CIV), a multisubunit enzyme composed of 14 subunits. The complex is composed of a catalytic core of 3 subunits MT-CO1, MT-CO2 and MT-CO3, encoded in the mitochondrial DNA, and 11 supernumerary subunits COX4I, COX5A, COX5B, COX6A, COX6B, COX6C, COX7A, COX7B, COX7C, COX8 and NDUFA4, which are encoded in the nuclear genome. The complex exists as a monomer or a dimer and forms supercomplexes (SCs) in the inner mitochondrial membrane with NADH-ubiquinone oxidoreductase (complex I, CI) and ubiquinol-cytochrome c oxidoreductase (cytochrome b-c1 complex, complex III, CIII), resulting in different assemblies (supercomplex SCI(1)III(2)IV(1) and megacomplex MCI(2)III(2)IV(2)). Interacts with RAB5IF. Interacts with FLVCR2; this interaction occurs in the absence of heme and is disrupted upon heme binding.

It localises to the mitochondrion inner membrane. In terms of biological role, component of the cytochrome c oxidase, the last enzyme in the mitochondrial electron transport chain which drives oxidative phosphorylation. The respiratory chain contains 3 multisubunit complexes succinate dehydrogenase (complex II, CII), ubiquinol-cytochrome c oxidoreductase (cytochrome b-c1 complex, complex III, CIII) and cytochrome c oxidase (complex IV, CIV), that cooperate to transfer electrons derived from NADH and succinate to molecular oxygen, creating an electrochemical gradient over the inner membrane that drives transmembrane transport and the ATP synthase. Cytochrome c oxidase is the component of the respiratory chain that catalyzes the reduction of oxygen to water. Electrons originating from reduced cytochrome c in the intermembrane space (IMS) are transferred via the dinuclear copper A center (CU(A)) of subunit 2 and heme A of subunit 1 to the active site in subunit 1, a binuclear center (BNC) formed by heme A3 and copper B (CU(B)). The BNC reduces molecular oxygen to 2 water molecules unsing 4 electrons from cytochrome c in the IMS and 4 protons from the mitochondrial matrix. NDUFA4 is required for complex IV maintenance. In Macaca fascicularis (Crab-eating macaque), this protein is Cytochrome c oxidase subunit NDUFA4 (NDUFA4).